The chain runs to 252 residues: Ribosomal RNA small subunit methyltransferase J (252 aa).

S-adenosyl-L-methionine is bound by residues 101–102 (RD), 117–118 (ER), 153–154 (SS), and D171.

The protein belongs to the methyltransferase superfamily. RsmJ family.

The protein localises to the cytoplasm. It carries out the reaction guanosine(1516) in 16S rRNA + S-adenosyl-L-methionine = N(2)-methylguanosine(1516) in 16S rRNA + S-adenosyl-L-homocysteine + H(+). In terms of biological role, specifically methylates the guanosine in position 1516 of 16S rRNA. The protein is Ribosomal RNA small subunit methyltransferase J of Salmonella dublin (strain CT_02021853).